A 420-amino-acid chain; its full sequence is Protein STB1 (420 aa).

S2 is subject to N-acetylserine. Positions 2 to 70 are interaction with SWI6; it reads SQPQMSPEKE…DEDHKTLLEA (69 aa). S7 carries the phosphoserine modification. Disordered regions lie at residues 30–187 and 273–319; these read QLKL…SDNT and DSPS…ELNG. Basic and acidic residues predominate over residues 43-55; that stretch reads RKQDSTTKKRSGE. The residue at position 72 (S72) is a Phosphoserine. T99 carries the post-translational modification Phosphothreonine. At S102 the chain carries Phosphoserine. Residues 106 to 122 show a composition bias toward basic and acidic residues; sequence RKAEDRSQQIKPRKEDT. Low complexity predominate over residues 156–169; it reads NNNNSSNHSNNNNN. The span at 277–319 shows a compositional bias: polar residues; it reads LYLSNNNGSVQATLSPQQRRKPTTNTLHPPSNVPTTPSRELNG. T419 is subject to Phosphothreonine.

As to quaternary structure, interacts with the ANK repeats of SWI6. The interaction with SWI6 is required for function. Interacts with SIN3. Post-translationally, phosphorylated by CDC28 in a cell cycle-dependent manner, inhibiting the interaction with SWI6.

It localises to the cytoplasm. The protein localises to the nucleus. Involved in the regulation and timing of MBF-dependent transcription in late G1 of the cell cycle. This is Protein STB1 (STB1) from Saccharomyces cerevisiae (strain ATCC 204508 / S288c) (Baker's yeast).